The primary structure comprises 343 residues: Thromboxane A2 receptor (343 aa).

At 1 to 29 (MWPNASSLGPCFRPMNITLEERRLIASPW) the chain is on the extracellular side. N-linked (GlcNAc...) asparagine glycans are attached at residues Asn4 and Asn16. Residues 30-52 (FAASFCLVGLASNLLALSVLMGA) traverse the membrane as a helical segment. The Cytoplasmic segment spans residues 53 to 66 (RQGSSQSRSSFLTF). A helical membrane pass occupies residues 67 to 87 (LCGLVLTDFMGLLVTGAIVVT). The Extracellular portion of the chain corresponds to 88–106 (QHFVLFEWQAVDPGCSLCH). A disulfide bond links Cys105 and Cys183. A helical membrane pass occupies residues 107 to 128 (FMGVIMVFFGLCPLLLGAAMAS). At 129 to 149 (ERFLGITRPFSRPATASQRRA) the chain is on the cytoplasmic side. Residues 150–172 (WTTVGLVWASALALGLLPLLGVG) traverse the membrane as a helical segment. The Extracellular segment spans residues 173–193 (HYTVQYPGSWCFLTLGTDPGD). Residues 194-219 (VAFGLLFALLGSISVGMSFLLNTISV) form a helical membrane-spanning segment. Topologically, residues 220-246 (ATLCHVYHGQATAQQRPRDCEVEMMVQ) are cytoplasmic. Residues 247 to 270 (LMGIMVVASICWMPLLVFIAQTVL) form a helical membrane-spanning segment. Residues 271–289 (QSPPAMSPTGQLSRLTERQ) lie on the Extracellular side of the membrane. A helical membrane pass occupies residues 290–311 (LLIYLRVATWNQILDPWVYILF). Residues 312–343 (RRAVIQRFYPRLSTRSRSLSLQPQLTRRSTIH) are Cytoplasmic-facing. A phosphoserine mark is found at Ser329 and Ser331.

This sequence belongs to the G-protein coupled receptor 1 family. In terms of assembly, interacts with RPGRIP1L. Interacts with RACK1; the interaction regulates TBXA2R cell surface expression.

Its subcellular location is the cell membrane. Functionally, receptor for thromboxane A2 (TXA2), a potent stimulator of platelet aggregation. The activity of this receptor is mediated by a G-protein that activates a phosphatidylinositol-calcium second messenger system. In the kidney, the binding of TXA2 to glomerular TP receptors causes intense vasoconstriction. Activates phospholipase C and adenylyl cyclase. The sequence is that of Thromboxane A2 receptor (TBXA2R) from Bos taurus (Bovine).